We begin with the raw amino-acid sequence, 573 residues long: MAVLNQMSVLDMIKAFRRNWRAHCNSERTTLCGPDSMLLALQLSMAENNKQHHGEFTVCLSDVLLTWKYFLHEKLNLPIENMKVVDHYEDIRKTYDDFLKNSNTLDLIDVYKKCSIMTSNCEKHMISSIQLRDFLSGTECAVNDENNPHSPASPVKCSQNDKQVRLLAKKIFLSYLSLLVNSKNDLALAQILNTPDRGLGREAFTNLKHAAREKQLSMFLMATSFIRTLELGGKGYAPPPSDPLWAHVKGLSAFVNFIDKLNEILGEVPNPSLAGGRILSAIRTQLIKGHSSGEPFYKAVEEVVQDLNLRIKNIINSQEGVTVSATNISPVPPKSFAINHDTAYCGRDAVKILLVLLDEDAASAPTRNKAELLYNDQSTAPHGGASVLTLFRSPTQVKSTPVKPLRERIHTSLQAEKNKQMRQTLIRSQFACTYKDDCIMSKSKWNVNSSSKPLSALRLENDVSEGAQPSVGKARLETSSENVHVDRSKDDKGPRKSTKRKLAKSKQPGVREDIHCDQGDELYQPKNVKILKVPSDSHRKAGGKLAPGARGNRCTTKDKLIPGQTKLTRFFML.

The tract at residues 463-511 is disordered; the sequence is VSEGAQPSVGKARLETSSENVHVDRSKDDKGPRKSTKRKLAKSKQPGVR. The span at 474-494 shows a compositional bias: basic and acidic residues; that stretch reads ARLETSSENVHVDRSKDDKGP. Over residues 495-504 the composition is skewed to basic residues; the sequence is RKSTKRKLAK.

The protein belongs to the PARI family. Interacts with RAD51 and PCNA. Interacts with PARP1. Interacts with TASOR. As to expression, present in testis (at protein level). Expressed in testis, gastrointestinal tract (jejunum, ileum, and colon) and immune system (thymus and spleen). Weakly expressed in lung, kidney, pituitary gland and muscle.

Its subcellular location is the cytoplasm. The protein resides in the nucleus. Its function is as follows. Required to suppress inappropriate homologous recombination, thereby playing a central role DNA repair and in the maintenance of genomic stability. Antagonizes homologous recombination by interfering with the formation of the RAD51-DNA homologous recombination structure. Positively regulate the poly(ADP-ribosyl)ation activity of PARP1; however such function may be indirect. Binds single-strand DNA and poly(A) homopolymers. This is PCNA-interacting partner (Parpbp) from Rattus norvegicus (Rat).